Reading from the N-terminus, the 202-residue chain is Small ribosomal subunit protein uS4c (202 aa).

The S4 RNA-binding domain maps to 90–154; that stretch reads MRLDNIIFRL…SQSIIIKNLN (65 aa).

The protein belongs to the universal ribosomal protein uS4 family. As to quaternary structure, part of the 30S ribosomal subunit. Contacts protein S5. The interaction surface between S4 and S5 is involved in control of translational fidelity.

It is found in the plastid. The protein localises to the chloroplast. In terms of biological role, one of the primary rRNA binding proteins, it binds directly to 16S rRNA where it nucleates assembly of the body of the 30S subunit. Functionally, with S5 and S12 plays an important role in translational accuracy. This is Small ribosomal subunit protein uS4c (rps4) from Marchantia polymorpha (Common liverwort).